The sequence spans 309 residues: Acetyl-coenzyme A carboxylase carboxyl transferase subunit beta (309 aa).

The CoA carboxyltransferase N-terminal domain occupies Leu27–Glu296. Residues Cys31, Cys34, Cys50, and Cys53 each contribute to the Zn(2+) site. The C4-type zinc-finger motif lies at Cys31–Cys53. The interval Gly288 to Gln309 is disordered.

The protein belongs to the AccD/PCCB family. As to quaternary structure, acetyl-CoA carboxylase is a heterohexamer composed of biotin carboxyl carrier protein (AccB), biotin carboxylase (AccC) and two subunits each of ACCase subunit alpha (AccA) and ACCase subunit beta (AccD). The cofactor is Zn(2+).

It is found in the cytoplasm. The enzyme catalyses N(6)-carboxybiotinyl-L-lysyl-[protein] + acetyl-CoA = N(6)-biotinyl-L-lysyl-[protein] + malonyl-CoA. Its pathway is lipid metabolism; malonyl-CoA biosynthesis; malonyl-CoA from acetyl-CoA: step 1/1. In terms of biological role, component of the acetyl coenzyme A carboxylase (ACC) complex. Biotin carboxylase (BC) catalyzes the carboxylation of biotin on its carrier protein (BCCP) and then the CO(2) group is transferred by the transcarboxylase to acetyl-CoA to form malonyl-CoA. The sequence is that of Acetyl-coenzyme A carboxylase carboxyl transferase subunit beta from Marinobacter nauticus (strain ATCC 700491 / DSM 11845 / VT8) (Marinobacter aquaeolei).